A 296-amino-acid chain; its full sequence is Glycine N-acyltransferase (296 aa).

N6-acetyllysine; alternate occurs at positions 16, 127, and 141. Residues K16, K127, and K141 each carry the N6-succinyllysine; alternate modification. Residue K159 is modified to N6-acetyllysine. K169 carries the post-translational modification N6-succinyllysine. N6-acetyllysine; alternate is present on residues K183 and K256. Residues K183 and K256 each carry the N6-succinyllysine; alternate modification.

The protein belongs to the glycine N-acyltransferase family. In terms of tissue distribution, predominantly expressed in liver (at protein level) and kidney. Down-regulated in hepatocellular carcinoma and other liver cancers.

It localises to the mitochondrion. The catalysed reaction is an acyl-CoA + glycine = an N-acylglycine + CoA + H(+). The enzyme catalyses benzoyl-CoA + glycine = N-benzoylglycine + CoA + H(+). Mitochondrial acyltransferase which transfers an acyl group to the N-terminus of glycine and glutamine, although much less efficiently. Can conjugate numerous substrates to form a variety of N-acylglycines, with a preference for benzoyl-CoA over phenylacetyl-CoA as acyl donors. Thereby detoxify xenobiotics, such as benzoic acid or salicylic acid, and endogenous organic acids, such as isovaleric acid. This Homo sapiens (Human) protein is Glycine N-acyltransferase (GLYAT).